Reading from the N-terminus, the 208-residue chain is Pyridoxine/pyridoxamine 5'-phosphate oxidase (208 aa).

Residues 55–60, 70–71, lysine 77, and glutamine 99 contribute to the FMN site; these read RMVLLK and YT. Lysine 60 lines the substrate pocket. Substrate is bound by residues tyrosine 117, arginine 121, and serine 125. FMN contacts are provided by residues 134-135 and tryptophan 180; that span reads QS. 186–188 is a binding site for substrate; the sequence is RIH. Residue arginine 190 coordinates FMN.

Belongs to the pyridoxamine 5'-phosphate oxidase family. In terms of assembly, homodimer. It depends on FMN as a cofactor.

It carries out the reaction pyridoxamine 5'-phosphate + O2 + H2O = pyridoxal 5'-phosphate + H2O2 + NH4(+). It catalyses the reaction pyridoxine 5'-phosphate + O2 = pyridoxal 5'-phosphate + H2O2. The protein operates within cofactor metabolism; pyridoxal 5'-phosphate salvage; pyridoxal 5'-phosphate from pyridoxamine 5'-phosphate: step 1/1. It participates in cofactor metabolism; pyridoxal 5'-phosphate salvage; pyridoxal 5'-phosphate from pyridoxine 5'-phosphate: step 1/1. Its function is as follows. Catalyzes the oxidation of either pyridoxine 5'-phosphate (PNP) or pyridoxamine 5'-phosphate (PMP) into pyridoxal 5'-phosphate (PLP). This chain is Pyridoxine/pyridoxamine 5'-phosphate oxidase, found in Pelagibacter ubique (strain HTCC1062).